The primary structure comprises 318 residues: Actin-related protein 2/3 complex subunit 2A (318 aa).

The tract at residues 297 to 318 (RSMNNKSFKRLGLNEVNHTNSK) is disordered.

The protein belongs to the ARPC2 family. Component of the Arp2/3 complex composed of ARP2, ARP3, ARPC1/p41-ARC, ARPC2/p34-ARC, ARPC3/p21-ARC, ARPC4/p20-ARC and ARPC5/p16-ARC. Interacts with ARPC4. As to expression, expressed at low levels in all tissues with a relatively highest expression in inflorescences.

The protein resides in the cytoplasm. The protein localises to the cytoskeleton. It is found in the cell projection. Functions as actin-binding component of the Arp2/3 complex which is involved in regulation of actin polymerization and together with an activating nucleation-promoting factor (NPF) mediates the formation of branched actin networks. Seems to contact the mother actin filament. Arp2/3 complex plays a critical role in the control of cell morphogenesis via the modulation of cell polarity development. The protein is Actin-related protein 2/3 complex subunit 2A (ARPC2A) of Arabidopsis thaliana (Mouse-ear cress).